The primary structure comprises 274 residues: Large ribosomal subunit protein uL2 (274 aa).

Disordered stretches follow at residues 35-55 (FGKK…RHRG) and 224-274 (AMNP…KLKG). Residues 45–55 (NHGRITTRHRG) show a composition bias toward basic residues. Residues 263–274 (KSSDKYIKKLKG) are compositionally biased toward basic and acidic residues.

Belongs to the universal ribosomal protein uL2 family. As to quaternary structure, part of the 50S ribosomal subunit. Forms a bridge to the 30S subunit in the 70S ribosome.

One of the primary rRNA binding proteins. Required for association of the 30S and 50S subunits to form the 70S ribosome, for tRNA binding and peptide bond formation. It has been suggested to have peptidyltransferase activity; this is somewhat controversial. Makes several contacts with the 16S rRNA in the 70S ribosome. The protein is Large ribosomal subunit protein uL2 of Wolbachia pipientis subsp. Culex pipiens (strain wPip).